The following is a 214-amino-acid chain: Pyridoxine/pyridoxamine 5'-phosphate oxidase (214 aa).

Substrate contacts are provided by residues 9-12 (RLDY) and lysine 67. FMN contacts are provided by residues 62–67 (RMVLLK), 77–78 (FT), lysine 84, and glutamine 106. Tyrosine 124, arginine 128, and serine 132 together coordinate substrate. FMN is bound by residues 141 to 142 (QS) and tryptophan 186. Position 192 to 194 (192 to 194 (RLH)) interacts with substrate. Position 196 (arginine 196) interacts with FMN.

The protein belongs to the pyridoxamine 5'-phosphate oxidase family. Homodimer. The cofactor is FMN.

The enzyme catalyses pyridoxamine 5'-phosphate + O2 + H2O = pyridoxal 5'-phosphate + H2O2 + NH4(+). It carries out the reaction pyridoxine 5'-phosphate + O2 = pyridoxal 5'-phosphate + H2O2. It functions in the pathway cofactor metabolism; pyridoxal 5'-phosphate salvage; pyridoxal 5'-phosphate from pyridoxamine 5'-phosphate: step 1/1. Its pathway is cofactor metabolism; pyridoxal 5'-phosphate salvage; pyridoxal 5'-phosphate from pyridoxine 5'-phosphate: step 1/1. In terms of biological role, catalyzes the oxidation of either pyridoxine 5'-phosphate (PNP) or pyridoxamine 5'-phosphate (PMP) into pyridoxal 5'-phosphate (PLP). In Microcystis aeruginosa (strain NIES-843 / IAM M-2473), this protein is Pyridoxine/pyridoxamine 5'-phosphate oxidase.